Reading from the N-terminus, the 387-residue chain is Flap endonuclease 1 (387 aa).

The segment at 1-104 (MGILGLSKLI…GELAKRAERR (104 aa)) is N-domain. Asp-34 provides a ligand contact to Mg(2+). Arg-47 and Arg-70 together coordinate DNA. Mg(2+) contacts are provided by Asp-86, Glu-158, Glu-160, Asp-179, and Asp-181. Residues 122–253 (GIEKFNRRLV…KRAIELINNY (132 aa)) are I-domain. Glu-158 contacts DNA. 2 residues coordinate DNA: Gly-231 and Asp-233. Asp-233 contributes to the Mg(2+) binding site. The tract at residues 336-344 (TQVRLDSFF) is interaction with PCNA. The tract at residues 345 to 387 (KTLPSTPNATNAAKRKAEEAKKSANNKKAKTSGGGGGRGRRPK) is disordered.

Belongs to the XPG/RAD2 endonuclease family. FEN1 subfamily. Interacts with PCNA. Three molecules of FEN1 bind to one PCNA trimer with each molecule binding to one PCNA monomer. PCNA stimulates the nuclease activity without altering cleavage specificity. Mg(2+) serves as cofactor. Phosphorylated. Phosphorylation upon DNA damage induces relocalization to the nuclear plasma.

The protein resides in the nucleus. It is found in the nucleolus. It localises to the nucleoplasm. The protein localises to the mitochondrion. Its function is as follows. Structure-specific nuclease with 5'-flap endonuclease and 5'-3' exonuclease activities involved in DNA replication and repair. During DNA replication, cleaves the 5'-overhanging flap structure that is generated by displacement synthesis when DNA polymerase encounters the 5'-end of a downstream Okazaki fragment. It enters the flap from the 5'-end and then tracks to cleave the flap base, leaving a nick for ligation. Also involved in the long patch base excision repair (LP-BER) pathway, by cleaving within the apurinic/apyrimidinic (AP) site-terminated flap. Acts as a genome stabilization factor that prevents flaps from equilibrating into structures that lead to duplications and deletions. Also possesses 5'-3' exonuclease activity on nicked or gapped double-stranded DNA, and exhibits RNase H activity. Also involved in replication and repair of rDNA and in repairing mitochondrial DNA. The chain is Flap endonuclease 1 from Drosophila yakuba (Fruit fly).